A 415-amino-acid polypeptide reads, in one-letter code: Polyketide biosynthesis malonyl-ACP decarboxylase PksF (415 aa).

The Ketosynthase family 3 (KS3) domain maps to 6-407 (LPEVVVTGVG…GMNTAVCIQN (402 aa)).

This sequence belongs to the thiolase-like superfamily. Beta-ketoacyl-ACP synthases family.

It is found in the cytoplasm. It carries out the reaction malonyl-[ACP] + H(+) = acetyl-[ACP] + CO2. The protein operates within antibiotic biosynthesis; bacillaene biosynthesis. Involved in some intermediate steps for the synthesis of the antibiotic polyketide bacillaene which is involved in secondary metabolism. It decarboxylates selectively the malonyl group attached on the acyl-carrier-protein AcpK (Mal-AcpK). This Bacillus subtilis (strain 168) protein is Polyketide biosynthesis malonyl-ACP decarboxylase PksF (pksF).